We begin with the raw amino-acid sequence, 217 residues long: Thiamine-phosphate synthase (217 aa).

4-amino-2-methyl-5-(diphosphooxymethyl)pyrimidine is bound by residues 39–43 (QYRDK) and asparagine 71. Residues aspartate 72 and aspartate 91 each coordinate Mg(2+). Threonine 110 is a 4-amino-2-methyl-5-(diphosphooxymethyl)pyrimidine binding site. 137 to 139 (SHT) is a binding site for 2-[(2R,5Z)-2-carboxy-4-methylthiazol-5(2H)-ylidene]ethyl phosphate. Lysine 140 is a binding site for 4-amino-2-methyl-5-(diphosphooxymethyl)pyrimidine. Glycine 167 is a 2-[(2R,5Z)-2-carboxy-4-methylthiazol-5(2H)-ylidene]ethyl phosphate binding site.

This sequence belongs to the thiamine-phosphate synthase family. Requires Mg(2+) as cofactor.

The enzyme catalyses 2-[(2R,5Z)-2-carboxy-4-methylthiazol-5(2H)-ylidene]ethyl phosphate + 4-amino-2-methyl-5-(diphosphooxymethyl)pyrimidine + 2 H(+) = thiamine phosphate + CO2 + diphosphate. It catalyses the reaction 2-(2-carboxy-4-methylthiazol-5-yl)ethyl phosphate + 4-amino-2-methyl-5-(diphosphooxymethyl)pyrimidine + 2 H(+) = thiamine phosphate + CO2 + diphosphate. The catalysed reaction is 4-methyl-5-(2-phosphooxyethyl)-thiazole + 4-amino-2-methyl-5-(diphosphooxymethyl)pyrimidine + H(+) = thiamine phosphate + diphosphate. The protein operates within cofactor biosynthesis; thiamine diphosphate biosynthesis; thiamine phosphate from 4-amino-2-methyl-5-diphosphomethylpyrimidine and 4-methyl-5-(2-phosphoethyl)-thiazole: step 1/1. Condenses 4-methyl-5-(beta-hydroxyethyl)thiazole monophosphate (THZ-P) and 2-methyl-4-amino-5-hydroxymethyl pyrimidine pyrophosphate (HMP-PP) to form thiamine monophosphate (TMP). This chain is Thiamine-phosphate synthase, found in Alcanivorax borkumensis (strain ATCC 700651 / DSM 11573 / NCIMB 13689 / SK2).